The sequence spans 954 residues: E3 ubiquitin-protein ligase MIB2 (954 aa).

Positions 1–80 constitute an MIB/HERC2 1 domain; sequence MDLDPYASMQ…AYDLLLYDNA (80 aa). The ZZ-type zinc-finger motif lies at 86 to 138; it reads HPNIICDCCKKHGIRGMRWKCKMCFDYDLCTQCYMNNKHDLSHAFERYETAHS. Cys-91, Cys-94, Cys-106, Cys-109, Cys-115, Cys-118, His-124, and His-128 together coordinate Zn(2+). An MIB/HERC2 2 domain is found at 149–227; the sequence is LTRITLKGTF…KVDLKCTVEA (79 aa). ANK repeat units lie at residues 464–493, 497–526, 530–559, 563–591, 597–626, 631–661, 665–694, 698–726, and 766–795; these read QGRT…TVNL, EGDT…GADL, AKCT…DVNL, HGDT…NIDF, QGFN…QLVD, DGFT…DVNV, RNQT…DVNA, DGDT…EMGS, and RGKS…EQQV. 2 consecutive RING-type zinc fingers follow at residues 830-865 and 910-943; these read CLVC…IKCQ and CPIC…PICR.

The protein resides in the cytoplasm. The enzyme catalyses S-ubiquitinyl-[E2 ubiquitin-conjugating enzyme]-L-cysteine + [acceptor protein]-L-lysine = [E2 ubiquitin-conjugating enzyme]-L-cysteine + N(6)-ubiquitinyl-[acceptor protein]-L-lysine.. It functions in the pathway protein modification; protein ubiquitination. Its function is as follows. E3 ubiquitin-protein ligase that mediates ubiquitination of Delta receptors, which act as ligands of Notch proteins. Positively regulates the Delta-mediated Notch signaling by ubiquitinating the intracellular domain of Delta, leading to endocytosis of Delta receptors. The chain is E3 ubiquitin-protein ligase MIB2 (MIB2) from Gallus gallus (Chicken).